A 367-amino-acid chain; its full sequence is Putrescine/agmatine-binding protein (367 aa).

Residues 1-19 form the signal peptide; that stretch reads MKKVCALALSILTTIGATA.

Belongs to the bacterial solute-binding protein 1 family.

It localises to the periplasm. Its function is as follows. Binds putrescine and agmatine. The chain is Putrescine/agmatine-binding protein from Pseudomonas aeruginosa (strain ATCC 15692 / DSM 22644 / CIP 104116 / JCM 14847 / LMG 12228 / 1C / PRS 101 / PAO1).